We begin with the raw amino-acid sequence, 498 residues long: Lysine--tRNA ligase (498 aa).

Positions 407 and 414 each coordinate Mg(2+).

This sequence belongs to the class-II aminoacyl-tRNA synthetase family. Homodimer. Requires Mg(2+) as cofactor.

It localises to the cytoplasm. The enzyme catalyses tRNA(Lys) + L-lysine + ATP = L-lysyl-tRNA(Lys) + AMP + diphosphate. The chain is Lysine--tRNA ligase from Rhizobium johnstonii (strain DSM 114642 / LMG 32736 / 3841) (Rhizobium leguminosarum bv. viciae).